A 339-amino-acid polypeptide reads, in one-letter code: Replication factor C subunit 2 (339 aa).

48-55 (YGPPGTGK) serves as a coordination point for ATP.

The protein belongs to the activator 1 small subunits family. Heterotetramer of subunits RFC2, RFC3, RFC4 and RFC5 that can form a complex with RFC1. In terms of tissue distribution, expressed in roots, leaves, shoot apical meristem (SAM), flag leaves and panicles.

It localises to the nucleus. May be involved in DNA replication and thus regulate cell proliferation. The sequence is that of Replication factor C subunit 2 (RFC2) from Oryza sativa subsp. japonica (Rice).